A 150-amino-acid polypeptide reads, in one-letter code: Ribosomal RNA large subunit methyltransferase H (150 aa).

Residues leucine 71, glycine 100, and 118–123 (FSQMTF) each bind S-adenosyl-L-methionine.

It belongs to the RNA methyltransferase RlmH family. In terms of assembly, homodimer.

The protein resides in the cytoplasm. It catalyses the reaction pseudouridine(1915) in 23S rRNA + S-adenosyl-L-methionine = N(3)-methylpseudouridine(1915) in 23S rRNA + S-adenosyl-L-homocysteine + H(+). Its function is as follows. Specifically methylates the pseudouridine at position 1915 (m3Psi1915) in 23S rRNA. The protein is Ribosomal RNA large subunit methyltransferase H of Mycoplasmopsis agalactiae (strain NCTC 10123 / CIP 59.7 / PG2) (Mycoplasma agalactiae).